Consider the following 459-residue polypeptide: V-type ATP synthase beta chain (459 aa).

It belongs to the ATPase alpha/beta chains family.

In terms of biological role, produces ATP from ADP in the presence of a proton gradient across the membrane. The V-type beta chain is a regulatory subunit. The chain is V-type ATP synthase beta chain from Thermoanaerobacter sp. (strain X514).